A 171-amino-acid chain; its full sequence is ATP synthase subunit b (171 aa).

Residues 2–22 traverse the membrane as a helical segment; it reads FLVKMVLGFLIFLSPLCATGL.

Belongs to the ATPase B chain family. F-type ATPases have 2 components, F(1) - the catalytic core - and F(0) - the membrane proton channel. F(1) has five subunits: alpha(3), beta(3), gamma(1), delta(1), epsilon(1). F(0) has three main subunits: a(1), b(2) and c(10-14). The alpha and beta chains form an alternating ring which encloses part of the gamma chain. F(1) is attached to F(0) by a central stalk formed by the gamma and epsilon chains, while a peripheral stalk is formed by the delta and b chains.

It localises to the cell inner membrane. Its function is as follows. F(1)F(0) ATP synthase produces ATP from ADP in the presence of a proton or sodium gradient. F-type ATPases consist of two structural domains, F(1) containing the extramembraneous catalytic core and F(0) containing the membrane proton channel, linked together by a central stalk and a peripheral stalk. During catalysis, ATP synthesis in the catalytic domain of F(1) is coupled via a rotary mechanism of the central stalk subunits to proton translocation. In terms of biological role, component of the F(0) channel, it forms part of the peripheral stalk, linking F(1) to F(0). The polypeptide is ATP synthase subunit b (Helicobacter pylori (strain Shi470)).